We begin with the raw amino-acid sequence, 247 residues long: UPF0280 protein MMP1236 (247 aa).

Belongs to the UPF0280 family.

The polypeptide is UPF0280 protein MMP1236 (Methanococcus maripaludis (strain DSM 14266 / JCM 13030 / NBRC 101832 / S2 / LL)).